A 919-amino-acid chain; its full sequence is Valine--tRNA ligase (919 aa).

The short motif at 46 to 56 (PNVTGTLHMGH) is the 'HIGH' region element. The 'KMSKS' region motif lies at 528 to 532 (KMSKS). Lys-531 contributes to the ATP binding site. The stretch at 849–919 (LAGLVDIEAE…KTLEKKEALG (71 aa)) forms a coiled coil.

This sequence belongs to the class-I aminoacyl-tRNA synthetase family. ValS type 1 subfamily. Monomer.

It is found in the cytoplasm. The catalysed reaction is tRNA(Val) + L-valine + ATP = L-valyl-tRNA(Val) + AMP + diphosphate. Catalyzes the attachment of valine to tRNA(Val). As ValRS can inadvertently accommodate and process structurally similar amino acids such as threonine, to avoid such errors, it has a 'posttransfer' editing activity that hydrolyzes mischarged Thr-tRNA(Val) in a tRNA-dependent manner. This Francisella tularensis subsp. tularensis (strain SCHU S4 / Schu 4) protein is Valine--tRNA ligase.